A 396-amino-acid chain; its full sequence is MLNDLDSIHQTDEGLREYLRSRGNRSLYRYRLTLESPQAPRITVSGREYLAFCSNDYLGLANHPELIAALCEGATQYGVGAGTSHLVSGHSRAHHLLEEALASFTRFPRALLFSTGYMANAGVVTALTGRGDAVFGDKLNHASLNDAALLSRARLSRYPHLDLATLERQLAASPARRKLVISDAVFSMDGDIAPLPELLELCERYDAWLLLDDAHGFGVLGNQGRGSLAHFNISSPRIIYMGTLGKAAGVFGAFVAAQEEIIETLIQCARSYIYTTATPPFLSHALLKSLELIAGGAGRREKLAQLTKLLKQECHPLRWQLLPSDTPIQPLVMGENAEALQVSEALRQKGILVTAIRPPTVPEGTARLRISLSSSHDIEDVMELGAALREIDRDME.

Residue Arg29 coordinates substrate. Residue 116-117 (GY) participates in pyridoxal 5'-phosphate binding. Position 141 (His141) interacts with substrate. Positions 187, 215, and 243 each coordinate pyridoxal 5'-phosphate. An N6-(pyridoxal phosphate)lysine modification is found at Lys246. Residue Thr360 coordinates substrate.

The protein belongs to the class-II pyridoxal-phosphate-dependent aminotransferase family. BioF subfamily. As to quaternary structure, homodimer. It depends on pyridoxal 5'-phosphate as a cofactor.

The enzyme catalyses 6-carboxyhexanoyl-[ACP] + L-alanine + H(+) = (8S)-8-amino-7-oxononanoate + holo-[ACP] + CO2. Its pathway is cofactor biosynthesis; biotin biosynthesis. In terms of biological role, catalyzes the decarboxylative condensation of pimeloyl-[acyl-carrier protein] and L-alanine to produce 8-amino-7-oxononanoate (AON), [acyl-carrier protein], and carbon dioxide. The protein is 8-amino-7-oxononanoate synthase of Nitrosospira multiformis (strain ATCC 25196 / NCIMB 11849 / C 71).